The chain runs to 536 residues: GMP synthase [glutamine-hydrolyzing] (536 aa).

Residues 4–206 (KILILDFGSQ…VLDICGARAD (203 aa)) form the Glutamine amidotransferase type-1 domain. The Nucleophile role is filled by C85. Active-site residues include H180 and E182. Residues 207–404 (WIMGDYISEA…LGLPYHMVYR (198 aa)) form the GMPS ATP-PPase domain. 234 to 240 (SGGVDSS) is an ATP binding site.

Homodimer.

It carries out the reaction XMP + L-glutamine + ATP + H2O = GMP + L-glutamate + AMP + diphosphate + 2 H(+). The protein operates within purine metabolism; GMP biosynthesis; GMP from XMP (L-Gln route): step 1/1. In terms of biological role, catalyzes the synthesis of GMP from XMP. This is GMP synthase [glutamine-hydrolyzing] from Albidiferax ferrireducens (strain ATCC BAA-621 / DSM 15236 / T118) (Rhodoferax ferrireducens).